The primary structure comprises 122 residues: Putative MOB kinase activator-like 2B (122 aa).

Residues histidine 69 and histidine 74 each coordinate Zn(2+).

This sequence belongs to the MOB1/phocein family.

It localises to the nucleus. The protein resides in the cytoplasm. Its subcellular location is the cytoskeleton. The protein localises to the phragmoplast. This chain is Putative MOB kinase activator-like 2B, found in Arabidopsis thaliana (Mouse-ear cress).